The following is a 58-amino-acid chain: Ribulose bisphosphate carboxylase large chain (58 aa).

A propeptide spanning residues 1–2 (MS) is cleaved from the precursor. P3 carries the N-acetylproline modification. K14 carries the post-translational modification N6,N6,N6-trimethyllysine.

This sequence belongs to the RuBisCO large chain family. Type I subfamily. As to quaternary structure, heterohexadecamer of 8 large chains and 8 small chains.

Its subcellular location is the plastid. It is found in the chloroplast. The catalysed reaction is 2 (2R)-3-phosphoglycerate + 2 H(+) = D-ribulose 1,5-bisphosphate + CO2 + H2O. The enzyme catalyses D-ribulose 1,5-bisphosphate + O2 = 2-phosphoglycolate + (2R)-3-phosphoglycerate + 2 H(+). RuBisCO catalyzes two reactions: the carboxylation of D-ribulose 1,5-bisphosphate, the primary event in carbon dioxide fixation, as well as the oxidative fragmentation of the pentose substrate in the photorespiration process. Both reactions occur simultaneously and in competition at the same active site. This Euphorbia characias (Albanian spurge) protein is Ribulose bisphosphate carboxylase large chain (rbcL).